A 268-amino-acid chain; its full sequence is 4-hydroxy-tetrahydrodipicolinate reductase (268 aa).

An NAD(+)-binding site is contributed by 8-13 (GAAGRM). An NADP(+)-binding site is contributed by R36. NAD(+) is bound by residues 99–101 (GTT) and 123–126 (AANF). H156 (proton donor/acceptor) is an active-site residue. H157 contacts (S)-2,3,4,5-tetrahydrodipicolinate. K160 (proton donor) is an active-site residue. (S)-2,3,4,5-tetrahydrodipicolinate is bound at residue 166-167 (GT).

It belongs to the DapB family.

It is found in the cytoplasm. It catalyses the reaction (S)-2,3,4,5-tetrahydrodipicolinate + NAD(+) + H2O = (2S,4S)-4-hydroxy-2,3,4,5-tetrahydrodipicolinate + NADH + H(+). The enzyme catalyses (S)-2,3,4,5-tetrahydrodipicolinate + NADP(+) + H2O = (2S,4S)-4-hydroxy-2,3,4,5-tetrahydrodipicolinate + NADPH + H(+). Its pathway is amino-acid biosynthesis; L-lysine biosynthesis via DAP pathway; (S)-tetrahydrodipicolinate from L-aspartate: step 4/4. In terms of biological role, catalyzes the conversion of 4-hydroxy-tetrahydrodipicolinate (HTPA) to tetrahydrodipicolinate. The polypeptide is 4-hydroxy-tetrahydrodipicolinate reductase (Pseudomonas fluorescens (strain SBW25)).